The following is a 29-amino-acid chain: Cyclotide mobo-A (29 aa).

A cross-link (cyclopeptide (Gly-Asn)) is located at residues 1 to 29 (GFPTCGETCTLGTCNTPGCTCSWPICTRN). 3 cysteine pairs are disulfide-bonded: cysteine 5–cysteine 19, cysteine 9–cysteine 21, and cysteine 14–cysteine 26.

This sequence belongs to the cyclotide family. Moebius subfamily. In terms of processing, this is a cyclic peptide.

In terms of biological role, probably participates in a plant defense mechanism. In Melicytus obovatus (Hymenanthera obovata), this protein is Cyclotide mobo-A.